We begin with the raw amino-acid sequence, 119 residues long: Virulence protein VsdF (119 aa).

Its function is as follows. Expressed but non-essential protein, involved in the virulence of Salmonellas. The sequence is that of Virulence protein VsdF (vsdF) from Salmonella dublin.